The sequence spans 218 residues: Elongation factor Ts (218 aa).

The tract at residues T82 to V85 is involved in Mg(2+) ion dislocation from EF-Tu.

This sequence belongs to the EF-Ts family.

The protein localises to the cytoplasm. Associates with the EF-Tu.GDP complex and induces the exchange of GDP to GTP. It remains bound to the aminoacyl-tRNA.EF-Tu.GTP complex up to the GTP hydrolysis stage on the ribosome. This chain is Elongation factor Ts, found in Prochlorococcus marinus (strain AS9601).